We begin with the raw amino-acid sequence, 28 residues long: Alpha-(1-6)-linked fucose-specific lectin (28 aa).

In terms of assembly, homohexamer. In terms of tissue distribution, expressed by mycelium-forming spores.

It localises to the secreted. Its function is as follows. Alpha-(1-6)-linked L-fucose specific lectin. The protein is Alpha-(1-6)-linked fucose-specific lectin of Rhizopus stolonifer (Rhizopus nigricans).